A 66-amino-acid chain; its full sequence is Large ribosomal subunit protein bL35 (66 aa).

A compositionally biased stretch (polar residues) spans 18–27; it reads ATGKIKSTQS. The segment at 18 to 41 is disordered; it reads ATGKIKSTQSAKRHGMTKRSKRSI. Positions 28–41 are enriched in basic residues; it reads AKRHGMTKRSKRSI.

It belongs to the bacterial ribosomal protein bL35 family.

In Ehrlichia ruminantium (strain Gardel), this protein is Large ribosomal subunit protein bL35.